A 125-amino-acid chain; its full sequence is Small ribosomal subunit protein uS12c (125 aa).

A disordered region spans residues 1-23; sequence MPTLEHLTRSPRKKIKRKTKSPA. Positions 9-20 are enriched in basic residues; sequence RSPRKKIKRKTK.

It belongs to the universal ribosomal protein uS12 family. Part of the 30S ribosomal subunit.

It is found in the plastid. The protein localises to the chloroplast. Its function is as follows. With S4 and S5 plays an important role in translational accuracy. Located at the interface of the 30S and 50S subunits. The polypeptide is Small ribosomal subunit protein uS12c (rps12) (Euglena gracilis).